Reading from the N-terminus, the 384-residue chain is Monomethylxanthine methyltransferase 2 (384 aa).

Residues tyrosine 18, cysteine 61, asparagine 66, aspartate 100, leucine 101, serine 139, phenylalanine 140, and cysteine 156 each coordinate S-adenosyl-L-homocysteine. 3 residues coordinate theobromine: tyrosine 157, histidine 160, and tryptophan 161. The Mg(2+) site is built by asparagine 178, phenylalanine 262, and asparagine 263. Position 368 (tyrosine 368) interacts with theobromine.

Belongs to the methyltransferase superfamily. Type-7 methyltransferase family. Requires Mg(2+) as cofactor. In terms of tissue distribution, expressed, at low levels, in young leaves, floral buds and immature fruits (grains), but not in old leaves and mature fruits. Highly expressed in developing endosperm and flower buds. Detected in young leaves.

It catalyses the reaction 7-methylxanthine + S-adenosyl-L-methionine = theobromine + S-adenosyl-L-homocysteine + H(+). It participates in alkaloid biosynthesis. Functionally, involved in the biosynthesis of caffeine. Catalyzes the conversion of 7-methylxanthine (7mX) to theobromine and with a lower activity of paraxanthine to caffeine. Does not have 1-N-methylation activity. The protein is Monomethylxanthine methyltransferase 2 of Coffea arabica (Arabian coffee).